The sequence spans 120 residues: Large ribosomal subunit protein eL18 (120 aa).

It belongs to the eukaryotic ribosomal protein eL18 family. As to quaternary structure, part of the 50S ribosomal subunit.

The protein is Large ribosomal subunit protein eL18 of Pyrococcus furiosus (strain ATCC 43587 / DSM 3638 / JCM 8422 / Vc1).